Consider the following 2191-residue polypeptide: Genome polyprotein (2191 aa).

Glycine 2 carries the N-myristoyl glycine; by host lipid modification. The Cytoplasmic portion of the chain corresponds to 2 to 1501; the sequence is GAQVSTQKTG…HVSRAFICLQ (1500 aa). Residues 566 to 582 are amphipathic alpha-helix; the sequence is FYQNDVQNAVERSIVRV. Residues histidine 878 and aspartate 896 each act as for protease 2A activity in the active site. Residues cysteine 913 and cysteine 915 each coordinate Zn(2+). The active-site For protease 2A activity is the cysteine 967. Positions 973 and 975 each coordinate Zn(2+). Residues 1107-1179 form a membrane-binding region; that stretch reads NNGWLKKFTE…EQSAPSQSDQ (73 aa). The tract at residues 1107-1245 is oligomerization; sequence NNGWLKKFTE…SPGVGKSVAT (139 aa). Residues 1128–1132 form an RNA-binding region; the sequence is AIKIQ. The region spanning 1211–1367 is the SF3 helicase domain; the sequence is EKKMSNYIQF…SMYNQNGKIN (157 aa). Zn(2+) contacts are provided by cysteine 1375, cysteine 1387, and cysteine 1392. Residues 1375-1392 form a C4-type; degenerate zinc finger; the sequence is CDEECCPVNFKKCCPLVC. The tract at residues 1419 to 1426 is RNA-binding; sequence EYNHRHSV. An oligomerization region spans residues 1430–1435; the sequence is LEALFQ. An intramembrane segment occupies 1502-1517; it reads ALTTFVSVAGIIYIIY. Residues 1518-2191 are Cytoplasmic-facing; the sequence is KLFAGFQGAY…TLRRKWLDSF (674 aa). Tyrosine 1527 carries the post-translational modification O-(5'-phospho-RNA)-tyrosine. The 179-residue stretch at 1547 to 1725 folds into the Peptidase C3 domain; it reads GPAFEFAVAM…FSAALLKHYF (179 aa). Residues histidine 1586, glutamate 1617, and cysteine 1693 each act as for protease 3C activity in the active site. Positions 1956–2072 constitute a RdRp catalytic domain; that stretch reads GHLIAFDYSG…SYPWPIDASL (117 aa). The Mg(2+) site is built by aspartate 1962 and aspartate 2058.

This sequence belongs to the picornaviruses polyprotein family. In terms of assembly, interacts with capsid protein VP1 and capsid protein VP3 to form heterotrimeric protomers. As to quaternary structure, interacts with capsid protein VP0, and capsid protein VP3 to form heterotrimeric protomers. Five protomers subsequently associate to form pentamers which serve as building blocks for the capsid. Interacts with capsid protein VP2, capsid protein VP3 and capsid protein VP4 following cleavage of capsid protein VP0. Interacts with host CD55 and FCGRT; these interactions promote virus attachment to the host cell and subsequent internalization. Interacts with capsid protein VP1 and capsid protein VP3 in the mature capsid. Interacts with host CD55 and FCGRT; these interactions promote virus attachment to the host cell and subsequent internalization. In terms of assembly, interacts with capsid protein VP0 and capsid protein VP1 to form heterotrimeric protomers. Five protomers subsequently associate to form pentamers which serve as building blocks for the capsid. Interacts with capsid protein VP4 in the mature capsid. Interacts with protein 2C; this interaction may be important for virion morphogenesis. Interacts with host FCGRT; this interaction promotes virus attachment to the host cell and subsequent internalization. As to quaternary structure, interacts with capsid protein VP1 and capsid protein VP3. Homodimer. In terms of assembly, homohexamer; forms a hexameric ring structure with 6-fold symmetry characteristic of AAA+ ATPases. Interacts (via N-terminus) with host RTN3 (via reticulon domain); this interaction is important for viral replication. Interacts with capsid protein VP3; this interaction may be important for virion morphogenesis. As to quaternary structure, interacts with protein 3CD. Homodimer. Interacts with host GBF1. Interacts (via GOLD domain) with host ACBD3 (via GOLD domain); this interaction allows the formation of a viral protein 3A/ACBD3 heterotetramer with a 2:2 stoichiometry, which will stimulate the recruitment of host PI4KB in order to synthesize PI4P at the viral RNA replication sites. In terms of assembly, interacts with RNA-directed RNA polymerase. As to quaternary structure, interacts with protein 3AB and with RNA-directed RNA polymerase. Interacts with Viral protein genome-linked and with protein 3CD. The cofactor is Mg(2+). Specific enzymatic cleavages in vivo by the viral proteases yield processing intermediates and the mature proteins. Post-translationally, myristoylation is required for the formation of pentamers during virus assembly. Further assembly of 12 pentamers and a molecule of genomic RNA generates the provirion. In terms of processing, during virion maturation, immature virions are rendered infectious following cleavage of VP0 into VP4 and VP2. This maturation seems to be an autocatalytic event triggered by the presence of RNA in the capsid and it is followed by a conformational change infectious virion. Myristoylation is required during RNA encapsidation and formation of the mature virus particle. Post-translationally, VPg is uridylylated by the polymerase into VPg-pUpU. This acts as a nucleotide-peptide primer for the genomic RNA replication.

It localises to the virion. The protein resides in the host cytoplasm. Its subcellular location is the host cytoplasmic vesicle membrane. It is found in the host nucleus. It carries out the reaction a ribonucleoside 5'-triphosphate + H2O = a ribonucleoside 5'-diphosphate + phosphate + H(+). It catalyses the reaction Selective cleavage of Tyr-|-Gly bond in the picornavirus polyprotein.. The catalysed reaction is RNA(n) + a ribonucleoside 5'-triphosphate = RNA(n+1) + diphosphate. The enzyme catalyses Selective cleavage of Gln-|-Gly bond in the poliovirus polyprotein. In other picornavirus reactions Glu may be substituted for Gln, and Ser or Thr for Gly.. Replication or transcription is subject to high level of random mutations by the nucleotide analog ribavirin. Functionally, forms an icosahedral capsid of pseudo T=3 symmetry with capsid proteins VP2 and VP3. The capsid is 300 Angstroms in diameter, composed of 60 copies of each capsid protein and enclosing the viral positive strand RNA genome. Capsid protein VP1 mainly forms the vertices of the capsid. Capsid protein VP1 interacts with host cell receptor to provide virion attachment to target host cells. This attachment induces virion internalization. Tyrosine kinases are probably involved in the entry process. After binding to its receptor, the capsid undergoes conformational changes. Capsid protein VP1 N-terminus (that contains an amphipathic alpha-helix) and capsid protein VP4 are externalized. Together, they shape a pore in the host membrane through which viral genome is translocated to host cell cytoplasm. In terms of biological role, forms an icosahedral capsid of pseudo T=3 symmetry with capsid proteins VP2 and VP3. The capsid is 300 Angstroms in diameter, composed of 60 copies of each capsid protein and enclosing the viral positive strand RNA genome. Its function is as follows. Lies on the inner surface of the capsid shell. After binding to the host receptor, the capsid undergoes conformational changes. Capsid protein VP4 is released, Capsid protein VP1 N-terminus is externalized, and together, they shape a pore in the host membrane through which the viral genome is translocated into the host cell cytoplasm. Component of immature procapsids, which is cleaved into capsid proteins VP4 and VP2 after maturation. Allows the capsid to remain inactive before the maturation step. Functionally, cysteine protease that cleaves viral polyprotein and specific host proteins. It is responsible for the autocatalytic cleavage between the P1 and P2 regions, which is the first cleavage occurring in the polyprotein. Also cleaves the host translation initiation factor EIF4G1, in order to shut down the capped cellular mRNA translation. Inhibits the host nucleus-cytoplasm protein and RNA trafficking by cleaving host members of the nuclear pores. Counteracts stress granule formation probably by antagonizing its assembly or promoting its dissassembly. In terms of biological role, plays an essential role in the virus replication cycle by acting as a viroporin. Creates a pore in the host endoplasmic reticulum and as a consequence releases Ca2+ in the cytoplasm of infected cell. In turn, high levels of cytoplasmic calcium may trigger membrane trafficking and transport of viral ER-associated proteins to viroplasms, sites of viral genome replication. Its function is as follows. Induces and associates with structural rearrangements of intracellular membranes. Displays RNA-binding, nucleotide binding and NTPase activities. May play a role in virion morphogenesis and viral RNA encapsidation by interacting with the capsid protein VP3. Localizes the viral replication complex to the surface of membranous vesicles. Together with protein 3CD binds the Cis-Active RNA Element (CRE) which is involved in RNA synthesis initiation. Acts as a cofactor to stimulate the activity of 3D polymerase, maybe through a nucleid acid chaperone activity. Functionally, localizes the viral replication complex to the surface of membranous vesicles. It inhibits host cell endoplasmic reticulum-to-Golgi apparatus transport and causes the disassembly of the Golgi complex, possibly through GBF1 interaction. This would result in depletion of MHC, trail receptors and IFN receptors at the host cell surface. Plays an essential role in viral RNA replication by recruiting ACBD3 and PI4KB at the viral replication sites, thereby allowing the formation of the rearranged membranous structures where viral replication takes place. In terms of biological role, acts as a primer for viral RNA replication and remains covalently bound to viral genomic RNA. VPg is uridylylated prior to priming replication into VPg-pUpU. The oriI viral genomic sequence may act as a template for this. The VPg-pUpU is then used as primer on the genomic RNA poly(A) by the RNA-dependent RNA polymerase to replicate the viral genome. During genome replication, the VPg-RNA linkage is removed by the host TDP2, thereby accelerating replication. During the late stage of the replication cycle, host TDP2 is excluded from sites of viral RNA synthesis and encapsidation, allowing for the generation of progeny virions. Its function is as follows. Involved in the viral replication complex and viral polypeptide maturation. It exhibits protease activity with a specificity and catalytic efficiency that is different from protease 3C. Protein 3CD binds to the 5'UTR of the viral genome. Replicates the viral genomic RNA on the surface of intracellular membranes. May form linear arrays of subunits that propagate along a strong head-to-tail interaction called interface-I. Covalently attaches UMP to a tyrosine of VPg, which is used to prime RNA synthesis. The positive stranded RNA genome is first replicated at virus induced membranous vesicles, creating a dsRNA genomic replication form. This dsRNA is then used as template to synthesize positive stranded RNA genomes. ss(+)RNA genomes are either translated, replicated or encapsidated. Functionally, major viral protease that mediates proteolytic processing of the polyprotein. Cleaves host EIF5B, contributing to host translation shutoff. Also cleaves host PABPC1, contributing to host translation shutoff. Cleaves host NLRP1, triggers host N-glycine-mediated degradation of the autoinhibitory NLRP1 N-terminal fragment. This chain is Genome polyprotein, found in Echovirus 6 (strain Charles).